Consider the following 754-residue polypeptide: Phosphatidylinositol 4-phosphate 5-kinase 7 (754 aa).

MORN repeat units follow at residues Tyr16–Ile38, Tyr39–Lys61, Tyr62–Val84, Tyr85–Leu107, Tyr108–Arg130, Tyr131–Leu153, Tyr154–Leu176, and Tyr177–Lys198. The PIPK domain maps to Gly329–Phe750. The activation loop stretch occupies residues Tyr710 to Ser731.

It carries out the reaction a 1,2-diacyl-sn-glycero-3-phospho-(1D-myo-inositol 4-phosphate) + ATP = a 1,2-diacyl-sn-glycero-3-phospho-(1D-myo-inositol-4,5-bisphosphate) + ADP + H(+). The polypeptide is Phosphatidylinositol 4-phosphate 5-kinase 7 (PIP5K7) (Arabidopsis thaliana (Mouse-ear cress)).